A 205-amino-acid chain; its full sequence is Protein phosphatase inhibitor 2 family member C (205 aa).

Disordered regions lie at residues 1-51 and 70-114; these read MSAS…DESS and EPGT…DHSC. Residues 12 to 17 form a required for binding PPP1CC region; sequence KGILKN. The span at 19 to 34 shows a compositional bias: low complexity; sequence SSSGSSVATSGQQSGG. The tract at residues 43-55 is required for binding PPP1CC; it reads KSQKWDESSILAT. Positions 84 to 102 are enriched in basic and acidic residues; sequence DSVRDVEGEDSVRGVEGKE. The segment at 147–150 is required for binding PPP1CC catalytic center, displacing metal ions and inhibition of PPP1CC catalytic activity; that stretch reads HYNE. Residues 165–205 are disordered; that stretch reads LQSEDDENEERPQATNEEKTAAEESEEAPLSGGLQTQSCDP. A compositionally biased stretch (basic and acidic residues) spans 174 to 186; the sequence is ERPQATNEEKTAA.

It belongs to the protein phosphatase inhibitor 2 family.

Its function is as follows. Functions as a protein phosphatase inhibitor. It inhibits activity of the catalytic subunit of PP1 and weakly inhibits the activity of myosin-associated phosphates. The protein is Protein phosphatase inhibitor 2 family member C (PPP1R2C) of Macaca fascicularis (Crab-eating macaque).